A 436-amino-acid polypeptide reads, in one-letter code: GTPase Der (436 aa).

2 consecutive EngA-type G domains span residues 4-167 (PIVA…KEEE) and 176-351 (IRLS…ENHK). Residues 10 to 17 (GRPNVGKS), 57 to 61 (DTGGI), 119 to 122 (NKVD), 182 to 189 (GRPNVGKS), 229 to 233 (DTAGM), and 294 to 297 (NKWD) contribute to the GTP site. The KH-like domain occupies 352-436 (KRVQSSTLNE…PVHIIARKRN (85 aa)).

Belongs to the TRAFAC class TrmE-Era-EngA-EngB-Septin-like GTPase superfamily. EngA (Der) GTPase family. Associates with the 50S ribosomal subunit.

GTPase that plays an essential role in the late steps of ribosome biogenesis. In Staphylococcus saprophyticus subsp. saprophyticus (strain ATCC 15305 / DSM 20229 / NCIMB 8711 / NCTC 7292 / S-41), this protein is GTPase Der.